We begin with the raw amino-acid sequence, 218 residues long: MSSSQKKAGGKAGKPTKRSQNYAALRKAQLPKPPALKVPVAKPTNTILPQTGCVWQSLGTPLSLSSFNGLGVRFLYSFLKDFTGPRILEEDLIYRMVFSITPSHAGTFCLTDDVTTEDGRAVAHGNPMQEFPHGAFHANEKFGFELVFTAPTHAGMQNQNFKHSYAVALCLDFDAQPEGSKNPSYRFNEVWVERKAFPRAGPLRSLITVGLLDEADDL.

The tract at residues 1 to 25 (MSSSQKKAGGKAGKPTKRSQNYAAL) is disordered. Residue serine 2 is modified to N-acetylserine; by host.

Belongs to the alphamovirus/ilarvirus capsid protein family.

The protein localises to the virion. Its function is as follows. Capsid protein. Binds to the to the 3' end of the nonpolyadenylated viral RNA and is involved in viral RNA translation initiation. Probably binds RNA and plays a role in packaging. The sequence is that of Capsid protein from Alfalfa mosaic virus (strain Strasbourg).